Consider the following 291-residue polypeptide: Beta-lactamase CTX-M-4 (291 aa).

The signal sequence occupies residues 1 to 28 (MMTQSIRRSMLTVMATLPLLFSSATLHA). S73 (acyl-ester intermediate) is an active-site residue. 237-239 (KTG) is a binding site for substrate.

This sequence belongs to the class-A beta-lactamase family.

The catalysed reaction is a beta-lactam + H2O = a substituted beta-amino acid. In terms of biological role, has cefotaxime-hydrolyzing activity. This chain is Beta-lactamase CTX-M-4 (bla), found in Salmonella typhimurium.